A 260-amino-acid polypeptide reads, in one-letter code: Pro-opiomelanocortin (260 aa).

The first 25 residues, 1 to 25 (MLQPVWSCILALLGVFIFHVGEVRS), serve as a signal peptide directing secretion. At glutamine 26 the chain carries Pyrrolidone carboxylic acid. Phenylalanine 86 carries the post-translational modification Phenylalanine amide. A glycan (N-linked (GlcNAc...) asparagine) is linked at asparagine 90. A propeptide spanning residues 104–138 (EDIANYPILNLLTGSDNQNTQQGIMEDEAVDRQDS) is cleaved from the precursor. At valine 153 the chain carries Valine amide.

It belongs to the POMC family. Specific enzymatic cleavages at paired basic residues yield the different active peptides.

Its subcellular location is the secreted. Stimulates the adrenal glands to release cortisol. Its function is as follows. Anorexigenic peptide. Increases the pigmentation of skin by increasing melanin production in melanocytes. Functionally, increases the pigmentation of skin by increasing melanin production in melanocytes. In terms of biological role, endogenous orexigenic opiate. Endogenous opiate. In Pelophylax ridibundus (Marsh frog), this protein is Pro-opiomelanocortin (pomc).